The chain runs to 309 residues: Tagatose-6-phosphate kinase (309 aa).

This sequence belongs to the carbohydrate kinase PfkB family. LacC subfamily.

The catalysed reaction is D-tagatofuranose 6-phosphate + ATP = D-tagatofuranose 1,6-bisphosphate + ADP + H(+). It functions in the pathway carbohydrate metabolism; D-tagatose 6-phosphate degradation; D-glyceraldehyde 3-phosphate and glycerone phosphate from D-tagatose 6-phosphate: step 1/2. This chain is Tagatose-6-phosphate kinase, found in Streptococcus pyogenes serotype M5 (strain Manfredo).